Here is a 331-residue protein sequence, read N- to C-terminus: DNA-directed RNA polymerase subunit alpha (331 aa).

Positions 1-223 (MDQKRPQLKA…DELTVFGNVE (223 aa)) are alpha N-terminal domain (alpha-NTD). Positions 260-331 (PYPADLDTPR…LAQFGLALRD (72 aa)) are alpha C-terminal domain (alpha-CTD).

It belongs to the RNA polymerase alpha chain family. As to quaternary structure, homodimer. The RNAP catalytic core consists of 2 alpha, 1 beta, 1 beta' and 1 omega subunit. When a sigma factor is associated with the core the holoenzyme is formed, which can initiate transcription.

It catalyses the reaction RNA(n) + a ribonucleoside 5'-triphosphate = RNA(n+1) + diphosphate. DNA-dependent RNA polymerase catalyzes the transcription of DNA into RNA using the four ribonucleoside triphosphates as substrates. The protein is DNA-directed RNA polymerase subunit alpha of Deinococcus geothermalis (strain DSM 11300 / CIP 105573 / AG-3a).